The primary structure comprises 170 residues: Peptide deformylase (170 aa).

Residues Cys92 and His134 each contribute to the Fe cation site. Residue Glu135 is part of the active site. Residue His138 coordinates Fe cation.

It belongs to the polypeptide deformylase family. The cofactor is Fe(2+).

The enzyme catalyses N-terminal N-formyl-L-methionyl-[peptide] + H2O = N-terminal L-methionyl-[peptide] + formate. Its function is as follows. Removes the formyl group from the N-terminal Met of newly synthesized proteins. Requires at least a dipeptide for an efficient rate of reaction. N-terminal L-methionine is a prerequisite for activity but the enzyme has broad specificity at other positions. This Chromohalobacter salexigens (strain ATCC BAA-138 / DSM 3043 / CIP 106854 / NCIMB 13768 / 1H11) protein is Peptide deformylase.